Here is a 450-residue protein sequence, read N- to C-terminus: Solute carrier family 52, riboflavin transporter, member 2 (450 aa).

A run of 5 helical transmembrane segments spans residues 14–34 (LLVA…WVEL), 47–67 (LPSY…LVTL), 79–99 (IPIQ…APLW), 114–136 (FLTL…LPFL), and 147–167 (FFLG…AQGV). Asn-178 carries N-linked (GlcNAc...) asparagine glycosylation. The chain crosses the membrane as a helical span at residues 201 to 221 (FFWVLTALLGTSAAAFQGLLL). Residues 230–268 (ATMGTGLRVETPGTEEEEEEEEASPLQEPPGQVASIVSS) form a disordered region. The segment covering 242 to 252 (GTEEEEEEEEA) has biased composition (acidic residues). 5 consecutive transmembrane segments (helical) span residues 282–302 (ACLL…LPAV), 317–337 (LAVV…MAVL), 344–364 (LYGL…LAVL), 371–391 (VGTS…AGVF), and 409–429 (ALLA…IAMF).

It belongs to the riboflavin transporter family. As to expression, highly expressed in the placenta and small intestine, moderately in the kidney, colon, lung, prostate, uterus, and thymus, and weakly in all other tissues.

It localises to the cell membrane. It carries out the reaction riboflavin(in) = riboflavin(out). With respect to regulation, riboflavin transport is Na(+)-independent but moderately pH-sensitive. Activity is strongly inhibited by riboflavin analogs, such as lumiflavin. Weakly inhibited by flavin adenine dinucleotide (FAD) and flavin mononucleotide (FMN). Its function is as follows. Plasma membrane transporter mediating the uptake by cells of the water soluble vitamin B2/riboflavin that plays a key role in biochemical oxidation-reduction reactions of the carbohydrate, lipid, and amino acid metabolism. May also act as a receptor for 4-hydroxybutyrate. This Rattus norvegicus (Rat) protein is Solute carrier family 52, riboflavin transporter, member 2 (Slc52a2).